The following is a 70-amino-acid chain: Aurein-3.1 (70 aa).

A signal peptide spans 1–22; it reads MAFLKKSLFLVLFLGLVSLSIC. A propeptide spanning residues 23 to 49 is cleaved from the precursor; that stretch reads EKEKRQNEEDEDENEAANHEEGSEEKR. Residues 27-48 form a disordered region; it reads RQNEEDEDENEAANHEEGSEEK. The span at 38-48 shows a compositional bias: basic and acidic residues; sequence AANHEEGSEEK. The residue at position 66 (Ile-66) is an Isoleucine amide.

As to expression, expressed by the skin dorsal glands.

It localises to the secreted. The protein resides in the target cell membrane. In terms of biological role, amphipathic alpha-helical antimicrobial peptide with weak to potent activity against Gram-positive bacteria, and no activity against Gram-negative bacteria. Probably acts by disturbing membrane functions with its amphipathic structure. Shows anticancer activity. This Ranoidea aurea (Green and golden bell frog) protein is Aurein-3.1.